Here is a 220-residue protein sequence, read N- to C-terminus: Inner membrane-spanning protein YciB (220 aa).

The next 6 membrane-spanning stretches (helical) occupy residues 20–40 (EVPP…FFFA), 57–77 (IGAP…IALA), 86–106 (LPIM…LTLW), 123–143 (LFGA…GYVF), 156–176 (KLTL…EVVW), and 187–207 (FKVW…MPLI).

Belongs to the YciB family.

It localises to the cell inner membrane. Its function is as follows. Plays a role in cell envelope biogenesis, maintenance of cell envelope integrity and membrane homeostasis. The sequence is that of Inner membrane-spanning protein YciB from Brucella anthropi (strain ATCC 49188 / DSM 6882 / CCUG 24695 / JCM 21032 / LMG 3331 / NBRC 15819 / NCTC 12168 / Alc 37) (Ochrobactrum anthropi).